The following is a 1043-amino-acid chain: Phosphatidylinositol 4,5-bisphosphate 3-kinase catalytic subunit delta isoform (1043 aa).

A PI3K-ABD domain is found at 16–105; the sequence is ESQSVVVDFL…LPVLRLVARE (90 aa). Residues 187–278 form the PI3K-RBD domain; that stretch reads NRALLVNVKF…GLTPHLTMVH (92 aa). The disordered stretch occupies residues 287-312; sequence DEQSNPAPQVQKPRAKPPPIPAKKPS. The C2 PI3K-type domain occupies 319-476; the sequence is LEQPFSIELI…SAAALVIYLP (158 aa). A PIK helical domain is found at 496-673; that stretch reads RHGERGRITE…GLIMEAYCRG (178 aa). Tyr523 carries the phosphotyrosine modification. A PI3K/PI4K catalytic domain is found at 744–1026; it reads CVEQCTFMDS…KFNEALRESW (283 aa). The interval 750–756 is G-loop; it reads FMDSKMK. Residues 889 to 897 are catalytic loop; the sequence is GIGDRHSDN. The segment at 908-934 is activation loop; it reads HIDFGHFLGNFKTKFGINRERVPFILT. Ser1038 bears the Phosphoserine; by autocatalysis mark.

It belongs to the PI3/PI4-kinase family. In terms of assembly, heterodimer of a catalytic subunit PIK3CD and a p85 regulatory subunit (PIK3R1, PIK3R2 or PIK3R3). Interacts with ERAS and HRAS. Autophosphorylation on Ser-1038 results in the almost complete inactivation of the lipid kinase activity. As to expression, abundantly expressed in adult mouse spleen as well as in testis. Isoform 1 is expressed in spleen and lung (at protein level). Isoform 1 is expressed predominantly in leukocytes.

The protein resides in the cytoplasm. The enzyme catalyses a 1,2-diacyl-sn-glycero-3-phospho-(1D-myo-inositol-4,5-bisphosphate) + ATP = a 1,2-diacyl-sn-glycero-3-phospho-(1D-myo-inositol-3,4,5-trisphosphate) + ADP + H(+). It carries out the reaction a 1,2-diacyl-sn-glycero-3-phospho-(1D-myo-inositol) + ATP = a 1,2-diacyl-sn-glycero-3-phospho-(1D-myo-inositol-3-phosphate) + ADP + H(+). It catalyses the reaction 1-octadecanoyl-2-(5Z,8Z,11Z,14Z)-eicosatetraenoyl-sn-glycero-3-phospho-1D-myo-inositol 4,5-bisphosphate + ATP = 1-octadecanoyl-2-(5Z,8Z,11Z,14Z-eicosatetraenoyl)-sn-glycero-3-phospho-(1D-myo-inositol 3,4,5-triphosphate) + ADP + H(+). The protein operates within phospholipid metabolism; phosphatidylinositol phosphate biosynthesis. Activated by growth factors and cytokine receptors through a tyrosine-kinase-dependent mechanism. Activated by RAS. IC87114 inhibits lipid kinase activity and is selective in cells at doses up to 5-10 uM. Among other effects, IC87114 reduces allergic responses, prevents the recruitment of antigen-specific T cells into target tissue, and affects natural killer cell chemotaxis. Its function is as follows. Phosphoinositide-3-kinase (PI3K) phosphorylates phosphatidylinositol (PI) and its phosphorylated derivatives at position 3 of the inositol ring to produce 3-phosphoinositides. Uses ATP and PtdIns(4,5)P2 (phosphatidylinositol 4,5-bisphosphate) to generate phosphatidylinositol 3,4,5-trisphosphate (PIP3). PIP3 plays a key role by recruiting PH domain-containing proteins to the membrane, including AKT1 and PDPK1, activating signaling cascades involved in cell growth, survival, proliferation, motility and morphology. Mediates immune responses. Plays a role in B-cell development, proliferation, migration, and function. Required for B-cell receptor (BCR) signaling. Mediates B-cell proliferation response to anti-IgM, anti-CD40 and IL4 stimulation. Promotes cytokine production in response to TLR4 and TLR9. Required for antibody class switch mediated by TLR9. Involved in the antigen presentation function of B-cells. Involved in B-cell chemotaxis in response to CXCL13 and sphingosine 1-phosphate (S1P). Required for proliferation, signaling and cytokine production of naive, effector and memory T-cells. Required for T-cell receptor (TCR) signaling. Mediates TCR signaling events at the immune synapse. Activation by TCR leads to antigen-dependent memory T-cell migration and retention to antigenic tissues. Together with PIK3CG participates in T-cell development. Contributes to T-helper cell expansion and differentiation. Required for T-cell migration mediated by homing receptors SELL/CD62L, CCR7 and S1PR1 and antigen dependent recruitment of T-cells. Together with PIK3CG is involved in natural killer (NK) cell development and migration towards the sites of inflammation. Participates in NK cell receptor activation. Plays a role in NK cell maturation and cytokine production. Together with PIK3CG is involved in neutrophil chemotaxis and extravasation. Together with PIK3CG participates in neutrophil respiratory burst. Plays important roles in mast-cell development and mast cell mediated allergic response. Involved in stem cell factor (SCF)-mediated proliferation, adhesion and migration. Required for allergen-IgE-induced degranulation and cytokine release. The lipid kinase activity is required for its biological function. This is Phosphatidylinositol 4,5-bisphosphate 3-kinase catalytic subunit delta isoform (Pik3cd) from Mus musculus (Mouse).